A 103-amino-acid chain; its full sequence is Large ribosomal subunit protein bL21 (103 aa).

Belongs to the bacterial ribosomal protein bL21 family. Part of the 50S ribosomal subunit. Contacts protein L20.

Its function is as follows. This protein binds to 23S rRNA in the presence of protein L20. The chain is Large ribosomal subunit protein bL21 from Desulforudis audaxviator (strain MP104C).